A 465-amino-acid polypeptide reads, in one-letter code: Catalase cnsD (465 aa).

His-39 is an active-site residue. Tyr-331 contributes to the heme binding site.

This sequence belongs to the catalase family. Heme is required as a cofactor.

It participates in alkaloid biosynthesis. Functionally, catalase; part of the gene cluster that mediates the biosynthesis of communesins, a prominent class of indole alkaloids with great potential as pharmaceuticals. Communesins are biosynthesized by the coupling of tryptamine and aurantioclavine, two building blocks derived from L-tryptophan. The L-tryptophan decarboxylase cnsB converts L-tryptophan to tryptamine, whereas the tryptophan dimethylallyltransferase cnsF converts L-tryptophan to 4-dimethylallyl tryptophan which is further transformed to aurantioclavine by the aurantioclavine synthase cnsA, probably aided by the catalase cnsD. The cytochrome P450 monooxygenase cnsC catalyzes the heterodimeric coupling between the two different indole moieties, tryptamine and aurantioclavine, to construct vicinal quaternary stereocenters and yield the heptacyclic communesin scaffold. The O-methyltransferase cnsE then methylates the communesin scaffold to produce communesin K, the simplest characterized communesin that contains the heptacyclic core. The dioxygenase cnsJ converts communesin K into communesin I. Acylation to introduce the hexadienyl group at position N16 of communesin I by the acyltransferase cnsK leads to the production of communesin B. The hexadienyl group is produced by the highly reducing polyketide synthase cnsI, before being hydrolytically removed from cnsI by the serine hydrolase cnsH, converted into hexadienyl-CoA by the CoA ligase cnsG, and then transferred to communesin I by cnsK. Surprisingly, cnsK may also be a promiscuous acyltransferase that can tolerate a range of acyl groups, including acetyl-, propionyl-, and butyryl-CoA, which lead to communesins A, G and H respectively. The roles of the alpha-ketoglutarate-dependent dioxygenases cnsM and cnsP have still to be determined. The polypeptide is Catalase cnsD (Penicillium expansum (Blue mold rot fungus)).